Here is an 85-residue protein sequence, read N- to C-terminus: Coiled-coil-helix-coiled-coil-helix domain-containing protein 7 (85 aa).

Residues 13 to 55 (INPCLSESDASTRCLDENNYDRERCSTYFLRYKNCRRFWNSIV) enclose the CHCH domain. Short sequence motifs (cx9C motif) lie at residues 16–26 (CLSESDASTRC) and 37–47 (CSTYFLRYKNC). Cystine bridges form between Cys16–Cys47 and Cys26–Cys37.

It belongs to the CHCHD7 family. Monomer.

The protein resides in the mitochondrion intermembrane space. In Homo sapiens (Human), this protein is Coiled-coil-helix-coiled-coil-helix domain-containing protein 7 (CHCHD7).